We begin with the raw amino-acid sequence, 436 residues long: Adenylosuccinate synthetase (436 aa).

Residues 12–18 (GDEGKGK) and 40–42 (GHT) contribute to the GTP site. The active-site Proton acceptor is Asp-13. Positions 13 and 40 each coordinate Mg(2+). Residues 13-16 (DEGK), 38-41 (NAGH), Thr-128, Arg-142, Gln-223, Thr-238, and Arg-302 contribute to the IMP site. Residue His-41 is the Proton donor of the active site. 298 to 304 (TTTGRRR) serves as a coordination point for substrate. Residues Arg-304, 330-332 (KLD), and 412-414 (SLG) each bind GTP.

This sequence belongs to the adenylosuccinate synthetase family. As to quaternary structure, homodimer. Requires Mg(2+) as cofactor.

It localises to the cytoplasm. The catalysed reaction is IMP + L-aspartate + GTP = N(6)-(1,2-dicarboxyethyl)-AMP + GDP + phosphate + 2 H(+). Its pathway is purine metabolism; AMP biosynthesis via de novo pathway; AMP from IMP: step 1/2. Plays an important role in the de novo pathway of purine nucleotide biosynthesis. Catalyzes the first committed step in the biosynthesis of AMP from IMP. The protein is Adenylosuccinate synthetase of Prochlorococcus marinus (strain AS9601).